The sequence spans 320 residues: Aspartate carbamoyltransferase catalytic subunit (320 aa).

Carbamoyl phosphate contacts are provided by Arg65 and Thr66. Residue Lys93 coordinates L-aspartate. Arg115, His143, and Gln146 together coordinate carbamoyl phosphate. Residues Arg176 and Arg230 each contribute to the L-aspartate site. Residues Gly271 and Pro272 each contribute to the carbamoyl phosphate site.

It belongs to the aspartate/ornithine carbamoyltransferase superfamily. ATCase family. As to quaternary structure, heterododecamer (2C3:3R2) of six catalytic PyrB chains organized as two trimers (C3), and six regulatory PyrI chains organized as three dimers (R2).

The enzyme catalyses carbamoyl phosphate + L-aspartate = N-carbamoyl-L-aspartate + phosphate + H(+). It functions in the pathway pyrimidine metabolism; UMP biosynthesis via de novo pathway; (S)-dihydroorotate from bicarbonate: step 2/3. Its function is as follows. Catalyzes the condensation of carbamoyl phosphate and aspartate to form carbamoyl aspartate and inorganic phosphate, the committed step in the de novo pyrimidine nucleotide biosynthesis pathway. The protein is Aspartate carbamoyltransferase catalytic subunit of Maricaulis maris (strain MCS10) (Caulobacter maris).